Consider the following 378-residue polypeptide: Queuine tRNA-ribosyltransferase (378 aa).

The active-site Proton acceptor is aspartate 90. Substrate contacts are provided by residues 90–94, aspartate 152, glutamine 194, and glycine 223; that span reads DSGGY. Residues 254–260 are RNA binding; sequence GVGKPED. Catalysis depends on aspartate 273, which acts as the Nucleophile. The RNA binding; important for wobble base 34 recognition stretch occupies residues 278–282; the sequence is TRNAR. 4 residues coordinate Zn(2+): cysteine 311, cysteine 313, cysteine 316, and histidine 342.

This sequence belongs to the queuine tRNA-ribosyltransferase family. As to quaternary structure, homodimer. Within each dimer, one monomer is responsible for RNA recognition and catalysis, while the other monomer binds to the replacement base PreQ1. Requires Zn(2+) as cofactor.

It catalyses the reaction 7-aminomethyl-7-carbaguanine + guanosine(34) in tRNA = 7-aminomethyl-7-carbaguanosine(34) in tRNA + guanine. It participates in tRNA modification; tRNA-queuosine biosynthesis. Its function is as follows. Catalyzes the base-exchange of a guanine (G) residue with the queuine precursor 7-aminomethyl-7-deazaguanine (PreQ1) at position 34 (anticodon wobble position) in tRNAs with GU(N) anticodons (tRNA-Asp, -Asn, -His and -Tyr). Catalysis occurs through a double-displacement mechanism. The nucleophile active site attacks the C1' of nucleotide 34 to detach the guanine base from the RNA, forming a covalent enzyme-RNA intermediate. The proton acceptor active site deprotonates the incoming PreQ1, allowing a nucleophilic attack on the C1' of the ribose to form the product. After dissociation, two additional enzymatic reactions on the tRNA convert PreQ1 to queuine (Q), resulting in the hypermodified nucleoside queuosine (7-(((4,5-cis-dihydroxy-2-cyclopenten-1-yl)amino)methyl)-7-deazaguanosine). The protein is Queuine tRNA-ribosyltransferase of Aquifex aeolicus (strain VF5).